We begin with the raw amino-acid sequence, 393 residues long: NAD(P)H-quinone oxidoreductase subunit H, chloroplastic (393 aa).

The protein belongs to the complex I 49 kDa subunit family. As to quaternary structure, NDH is composed of at least 16 different subunits, 5 of which are encoded in the nucleus.

The protein localises to the plastid. The protein resides in the chloroplast thylakoid membrane. The catalysed reaction is a plastoquinone + NADH + (n+1) H(+)(in) = a plastoquinol + NAD(+) + n H(+)(out). It carries out the reaction a plastoquinone + NADPH + (n+1) H(+)(in) = a plastoquinol + NADP(+) + n H(+)(out). In terms of biological role, NDH shuttles electrons from NAD(P)H:plastoquinone, via FMN and iron-sulfur (Fe-S) centers, to quinones in the photosynthetic chain and possibly in a chloroplast respiratory chain. The immediate electron acceptor for the enzyme in this species is believed to be plastoquinone. Couples the redox reaction to proton translocation, and thus conserves the redox energy in a proton gradient. The chain is NAD(P)H-quinone oxidoreductase subunit H, chloroplastic from Pelargonium hortorum (Common geranium).